The primary structure comprises 136 residues: Large ribosomal subunit protein eL27 (136 aa).

The region spanning 5 to 40 is the KOW domain; sequence MKPGKVVMVLAGRYAGRKAVIVKNIDDGTADRPYSH.

This sequence belongs to the eukaryotic ribosomal protein eL27 family. In terms of assembly, component of the large ribosomal subunit.

It localises to the cytoplasm. The protein resides in the cytosol. The protein localises to the rough endoplasmic reticulum. In terms of biological role, component of the large ribosomal subunit. The polypeptide is Large ribosomal subunit protein eL27 (rpl27) (Danio rerio (Zebrafish)).